A 447-amino-acid chain; its full sequence is MNSIIKGNVLQMTKKVYIRTFGCQMNQADTEIITALLQDEGYVMTGSEERADLVILNTCAVRENAVEKILHTLDHMKGKRRSRPGLLVGVIGCVPQYYREKMFGMADGIDFLAGPDTYRQLPAMIANAGQGIRGADFGFSSDETYCGIEPARSGTISAFIPVMRGCNNRCAFCVVPFTRGKERSRPFRSVLEDVGRLAASGYKEITLLGQNVNSYSDDEAACDFTELLDRVAVAAEGVRIRFTTSHPKDISESLVRVIAARNNICNAIHLPVQSGSTRMLKLMNRGHTREEYFEKIAMIRSAIPGVTVSTDLIAGFCGETLEDHQATLSMMEDVRFDFAYMFYYSVRPGTYAAKHLPDDVPEEEKKRRLEEIIALQGSISGERNAAEVGAVVEVLAESESKRSSEMLMGRTDTNRVVVFDRHGFEAGDLVKVRIRSSTPATLIGTPA.

Residues 14-130 (KKVYIRTFGC…LPAMIANAGQ (117 aa)) enclose the MTTase N-terminal domain. 6 residues coordinate [4Fe-4S] cluster: cysteine 23, cysteine 59, cysteine 93, cysteine 166, cysteine 170, and cysteine 173. In terms of domain architecture, Radical SAM core spans 152-382 (RSGTISAFIP…IALQGSISGE (231 aa)). In terms of domain architecture, TRAM spans 385–447 (AAEVGAVVEV…TPATLIGTPA (63 aa)).

It belongs to the methylthiotransferase family. MiaB subfamily. In terms of assembly, monomer. [4Fe-4S] cluster is required as a cofactor.

It is found in the cytoplasm. It catalyses the reaction N(6)-dimethylallyladenosine(37) in tRNA + (sulfur carrier)-SH + AH2 + 2 S-adenosyl-L-methionine = 2-methylsulfanyl-N(6)-dimethylallyladenosine(37) in tRNA + (sulfur carrier)-H + 5'-deoxyadenosine + L-methionine + A + S-adenosyl-L-homocysteine + 2 H(+). Catalyzes the methylthiolation of N6-(dimethylallyl)adenosine (i(6)A), leading to the formation of 2-methylthio-N6-(dimethylallyl)adenosine (ms(2)i(6)A) at position 37 in tRNAs that read codons beginning with uridine. This Chlorobium phaeobacteroides (strain BS1) protein is tRNA-2-methylthio-N(6)-dimethylallyladenosine synthase.